Here is a 166-residue protein sequence, read N- to C-terminus: Large ribosomal subunit protein uL10 (166 aa).

It belongs to the universal ribosomal protein uL10 family. In terms of assembly, part of the ribosomal stalk of the 50S ribosomal subunit. The N-terminus interacts with L11 and the large rRNA to form the base of the stalk. The C-terminus forms an elongated spine to which L12 dimers bind in a sequential fashion forming a multimeric L10(L12)X complex.

Its function is as follows. Forms part of the ribosomal stalk, playing a central role in the interaction of the ribosome with GTP-bound translation factors. In Pseudomonas syringae pv. tomato (strain ATCC BAA-871 / DC3000), this protein is Large ribosomal subunit protein uL10.